A 90-amino-acid polypeptide reads, in one-letter code: Probable Fe(2+)-trafficking protein (90 aa).

Belongs to the Fe(2+)-trafficking protein family.

Functionally, could be a mediator in iron transactions between iron acquisition and iron-requiring processes, such as synthesis and/or repair of Fe-S clusters in biosynthetic enzymes. The protein is Probable Fe(2+)-trafficking protein of Haemophilus influenzae (strain PittEE).